A 150-amino-acid chain; its full sequence is 1,4-dihydroxy-2-naphthoyl-CoA hydrolase (150 aa).

D19 is a catalytic residue.

It belongs to the 4-hydroxybenzoyl-CoA thioesterase family. DHNA-CoA hydrolase subfamily.

It catalyses the reaction 1,4-dihydroxy-2-naphthoyl-CoA + H2O = 1,4-dihydroxy-2-naphthoate + CoA + H(+). It participates in cofactor biosynthesis; phylloquinone biosynthesis. It functions in the pathway quinol/quinone metabolism; 1,4-dihydroxy-2-naphthoate biosynthesis; 1,4-dihydroxy-2-naphthoate from chorismate: step 7/7. Functionally, catalyzes the hydrolysis of 1,4-dihydroxy-2-naphthoyl-CoA (DHNA-CoA) to 1,4-dihydroxy-2-naphthoate (DHNA), a reaction involved in phylloquinone (vitamin K1) biosynthesis. The sequence is that of 1,4-dihydroxy-2-naphthoyl-CoA hydrolase from Prochlorococcus marinus (strain MIT 9312).